The sequence spans 251 residues: Ribonuclease HII (251 aa).

The 192-residue stretch at 32 to 223 folds into the RNase H type-2 domain; the sequence is GPVAGVDEAG…VRERLGLRPL (192 aa). Asp38, Glu39, and Asp132 together coordinate a divalent metal cation.

The protein belongs to the RNase HII family. Mn(2+) is required as a cofactor. The cofactor is Mg(2+).

It is found in the cytoplasm. It carries out the reaction Endonucleolytic cleavage to 5'-phosphomonoester.. Functionally, endonuclease that specifically degrades the RNA of RNA-DNA hybrids. This is Ribonuclease HII from Nocardia farcinica (strain IFM 10152).